Reading from the N-terminus, the 547-residue chain is Sodium/hydrogen exchanger 9B2 (547 aa).

A disordered region spans residues 1–68 (MEDEDKTAEC…PQDSPTEPNG (68 aa)). Residues 1-86 (MEDEDKTAEC…ACPPRGCLAR (86 aa)) are Cytoplasmic-facing. Basic and acidic residues predominate over residues 23–45 (APPHHELQEERVMSLRGTDRSEP). Phosphoserine is present on S49. Residues 87–104 (VITNGTMVVLLWAMVWSV) form a helical membrane-spanning segment. At 105-113 (TGPECLPGG) the chain is on the extracellular side. The helical transmembrane segment at 114–133 (NLFGIIILFYCSITGGKLFG) threads the bilayer. Residues 134 to 144 (LIKFPTLPPLP) are Cytoplasmic-facing. The helical transmembrane segment at 145–161 (PLLGMLLAGFLLRNIPV) threads the bilayer. Over 162–171 (INDSVRIQHK) the chain is Extracellular. A helical transmembrane segment spans residues 172 to 189 (WSSSLRSIALSVILVRAG). The Cytoplasmic portion of the chain corresponds to 190–200 (LGLDSKALRKL). Residues 201-227 (KGVCVRLAMGPCIVEACASAILSHFLM) form a helical membrane-spanning segment. Residues 228 to 233 (GLPWQW) lie on the Extracellular side of the membrane. A helical membrane pass occupies residues 234–242 (GFILGFVVG). Topologically, residues 243–270 (AVSPAVVVPSMLLLQEGGYGVGKGIPTL) are cytoplasmic. 4 residues coordinate Na(+): V244, G275, D278, and D279. Residues 271-290 (LMAAGSFDDILAITGFNTCL) form a helical membrane-spanning segment. The Extracellular portion of the chain corresponds to 291–300 (GVAFSTGSTV). A helical membrane pass occupies residues 301-324 (FNIFRGILEVVIGVAAGSFLGFFI). Topologically, residues 325 to 339 (QYFPSRDQDNLVWKR) are cytoplasmic. A helical transmembrane segment spans residues 340–357 (AFLVLGFAVLAVFSSVYF). Over 358–361 (SFPG) the chain is Extracellular. A helical membrane pass occupies residues 362-373 (SGGLCTLVMAFL). The Cytoplasmic portion of the chain corresponds to 374–390 (AGMRWTDKKSEVEKVIA). A helical transmembrane segment spans residues 391-411 (VTWDVFQPLLFGLIGAEVSIV). Over 412–417 (SLRAET) the chain is Extracellular. Residues 418-440 (VGLCVATLSIAVLIRILTTFLMV) traverse the membrane as a helical segment. The Cytoplasmic segment spans residues 441–461 (CFAGFNIKEKIFISFAWLPKA). A helical membrane pass occupies residues 462–473 (TVQAAIGSVALD). Over 474–486 (TARSHGEKQLEDY) the chain is Extracellular. The chain crosses the membrane as a helical span at residues 487–509 (GMDVLTVAFLAILITAPIGSLLI). The Cytoplasmic portion of the chain corresponds to 510 to 547 (GLLGPRVLQKSEHRTEEEVQGETSAHIQRKPEDSITEA). Positions 522–547 (HRTEEEVQGETSAHIQRKPEDSITEA) are disordered. Residues 538–547 (RKPEDSITEA) show a composition bias toward basic and acidic residues.

The protein belongs to the monovalent cation:proton antiporter 1 (CPA1) transporter (TC 2.A.36) family. As to quaternary structure, homodimer; dimerization is essential for SLC9B2 activity. Lipids seem to play a role in the stabilization of the dimerization subdomain. In terms of tissue distribution, widely expressed. However expression seems to be restricted to specific cell types within individual organs, e.g. osteoclasts in the bone, distal tubules of the kidney or beta-cells of Langerhans islets. In sperm specifically present in the principal piece of sperm tail (at protein level).

It localises to the cell membrane. Its subcellular location is the mitochondrion membrane. The protein localises to the endosome membrane. It is found in the lysosome membrane. The protein resides in the recycling endosome membrane. It localises to the cytoplasmic vesicle. Its subcellular location is the secretory vesicle. The protein localises to the synaptic vesicle membrane. It is found in the cell projection. The protein resides in the cilium. It localises to the flagellum membrane. Its subcellular location is the basolateral cell membrane. The protein localises to the apical cell membrane. It catalyses the reaction Na(+)(in) + H(+)(out) = Na(+)(out) + H(+)(in). The enzyme catalyses Li(+)(out) + H(+)(in) = Li(+)(in) + H(+)(out). It carries out the reaction Li(+)(in) + Na(+)(out) = Li(+)(out) + Na(+)(in). Its activity is regulated as follows. Allosterically inhibited by the N-terminal domain. Inhibited by phloretin. Functionally, electroneutral Na(+) Li(+)/H(+) antiporter that extrudes Na(+) or Li(+) in exchange for external protons across the membrane. Uses the proton gradient/membrane potential to extrude sodium. Contributes to the regulation of intracellular pH and sodium homeostasis. Also able to mediate Na(+)/Li(+) antiporter activity in kidney. May play a physiological role in renal tubular function and blood pressure homeostasis. Plays an important role for insulin secretion and clathrin-mediated endocytosis in beta-cells. Involved in sperm motility and fertility. It is controversial whether SLC9B2 plays a role in osteoclast differentiation or not. This chain is Sodium/hydrogen exchanger 9B2, found in Mus musculus (Mouse).